The primary structure comprises 504 residues: DnaJ homolog subfamily C member 3 (504 aa).

The N-terminal stretch at 1–31 is a signal peptide; that stretch reads MVAPGSVGSRLGAVFPFLLVLVDLQYEGAEC. TPR repeat units lie at residues 37 to 70, 72 to 104, 105 to 138, 154 to 187, 188 to 221, 222 to 255, 268 to 301, 306 to 339, and 340 to 373; these read VEKHLELGKKLLAAGQLADALSQFHAAVDGDPDN, IAYYRRATVFLAMGKSKAALPDLTKVIALKMDF, TAARLQRGHLLLKQGKLDEAEDDFKKVLKSNPSE, MQRLRSQALDAFDGADYTAAITFLDKILEVCVWD, AELRELRAECFIKEGEPRKAISDLKAASKLKSDN, TEAFYKISTLYYQLGDHELSLSEVRECLKLDQDH, LNKLIESAEELIRDGRYTDATSKYESVMKTEPSV, VRSKERICHCFSKDEKPVEAIRICSEVLQMEPDN, and VNALKDRAEAYLIEEMYDEAIQDYEAAQEHNEND. Cysteines 248 and 258 form a disulfide. Position 274 is a phosphoserine (Ser274). Cys313 and Cys329 form a disulfide bridge. The flexible linker stretch occupies residues 375-393; that stretch reads QIREGLEKAQRLLKQSQKR. The J domain maps to 394-462; it reads DYYKILGVKR…EMRKKFDDGE (69 aa). The interval 451-481 is disordered; that stretch reads DPEMRKKFDDGEDPLDAESQQGGGGNPFHRS.

Interacts with EIF2AK4/GCN2; this interaction occurs under endoplasmic reticulum (ER) stress, hypothermic and amino acid starving stress conditions and inhibits EIF2AK4/GCN2 kinase activity. Interacts with EIF2AK3. Interacts with EIF2AK2. Forms a trimeric complex with DNAJB1 and HSPA8. Interacts with THAP12. In terms of tissue distribution, widely expressed, with high level in the liver.

It is found in the endoplasmic reticulum. Its function is as follows. Involved in the unfolded protein response (UPR) during endoplasmic reticulum (ER) stress. Acts as a negative regulator of the EIF2AK4/GCN2 kinase activity by preventing the phosphorylation of eIF-2-alpha at 'Ser-52' and hence attenuating general protein synthesis under ER stress, hypothermic and amino acid starving stress conditions. Co-chaperone of HSPA8/HSC70, it stimulates its ATPase activity. May inhibit both the autophosphorylation of EIF2AK2/PKR and the ability of EIF2AK2 to catalyze phosphorylation of the EIF2A. May inhibit EIF2AK3/PERK activity. The polypeptide is DnaJ homolog subfamily C member 3 (Dnajc3) (Mus musculus (Mouse)).